A 361-amino-acid polypeptide reads, in one-letter code: 3-dehydroquinate synthase (361 aa).

It belongs to the archaeal-type DHQ synthase family.

The enzyme catalyses 2-amino-2,3,7-trideoxy-D-lyxo-hept-6-ulosonate + NAD(+) + H2O = 3-dehydroquinate + NH4(+) + NADH + H(+). In terms of biological role, catalyzes the oxidative deamination and cyclization of 2-amino-3,7-dideoxy-D-threo-hept-6-ulosonic acid (ADH) to yield 3-dehydroquinate (DHQ), which is fed into the canonical shikimic pathway of aromatic amino acid biosynthesis. The protein is 3-dehydroquinate synthase of Methanococcus maripaludis (strain DSM 14266 / JCM 13030 / NBRC 101832 / S2 / LL).